Consider the following 261-residue polypeptide: Adenosylcobinamide-GDP ribazoletransferase (261 aa).

A run of 5 helical transmembrane segments spans residues 12 to 32, 46 to 66, 67 to 87, 120 to 140, and 199 to 219; these read NLFF…WVVI, LVGL…QLIL, PASI…GAFH, GALS…ELAL, and IFVL…TLWL.

The protein belongs to the CobS family. It depends on Mg(2+) as a cofactor.

Its subcellular location is the cell inner membrane. It carries out the reaction alpha-ribazole + adenosylcob(III)inamide-GDP = adenosylcob(III)alamin + GMP + H(+). The enzyme catalyses alpha-ribazole 5'-phosphate + adenosylcob(III)inamide-GDP = adenosylcob(III)alamin 5'-phosphate + GMP + H(+). It participates in cofactor biosynthesis; adenosylcobalamin biosynthesis; adenosylcobalamin from cob(II)yrinate a,c-diamide: step 7/7. In terms of biological role, joins adenosylcobinamide-GDP and alpha-ribazole to generate adenosylcobalamin (Ado-cobalamin). Also synthesizes adenosylcobalamin 5'-phosphate from adenosylcobinamide-GDP and alpha-ribazole 5'-phosphate. The chain is Adenosylcobinamide-GDP ribazoletransferase from Shewanella frigidimarina (strain NCIMB 400).